We begin with the raw amino-acid sequence, 327 residues long: Thiamine-binding periplasmic protein (327 aa).

The first 18 residues, 1-18 (MLKKYLPLLLLCAAPAFA), serve as a signal peptide directing secretion. Residues 59–60 (DG), 161–162 (ST), tryptophan 197, and 215–218 (YTTS) contribute to the thiamine site.

It belongs to the bacterial solute-binding protein 1 family. As to quaternary structure, the complex is composed of two ATP-binding proteins (ThiQ), two transmembrane proteins (ThiP) and a solute-binding protein (ThiB).

Its subcellular location is the periplasm. Part of the ABC transporter complex ThiBPQ involved in thiamine import. Is also involved in thiamine pyrophosphate transport. This is Thiamine-binding periplasmic protein from Salmonella typhimurium (strain LT2 / SGSC1412 / ATCC 700720).